The following is a 911-amino-acid chain: MTEGKSIINANLTPLPDKVGVDGLEDKWRAVWDEDGTYKFRNTRDRKAVYSIDTPPPTVSGSLHVGHVFSYTHTDVIARYKRMRGYDVFYPMGWDDNGLPTERRVQNYYGVRVDVSLPYDPDFKPPFEGTDGKKIDAKDQVPISRKNFIELCERLTAQDEKLFEALWRKLGLSIDWSQTYHTIGQHPQRVAQKAFLRNLARGEAYQQDAPGLWDVTFQTAVAQAELESREYPGFYHKVAFRFEDGTPIYIETTRPELLAACTSLIANPNDERYKQYFGQYVYSPLFKVKVPILAHPAAEMDKGAGIAMCCTFGDVTDVEWWRDLKLPTRPIIQRNGRIVMDTPDWIEDPAGREVFAETAGKTTFSARKIIVDKLRESGDLDGEPTPTKRMTNFYEKGDKPLEIVTSRQWYLKNGGTDAKLNAELIERGKELEFHPDFMRVRYENWVHGLNGDWLISRQRFFGVPFPLWYPVNASGEPDYDHPITPSEDRLPIDPTIDVPEGYDESQRDVPGGFTAEKDIMDTWATSSLTPQIVTHWAEPDEASQALFKSTFPMDLRPQGQDIIRTWLFSTVDRAHLENKCLPWAHATLSGWILDPDHKKMSKSKGNVVVPNEPIEKFGADAVRYWAAAARLGLDATYDIGQMKIGRRLAIKLLNATKFALAIGREDENHHVGAAAEAAWNPADVTEPLDRAAMAKLAVVVRQATEALESYEHSKALEVIESYFWQFCDDYIELVKNRAYGTPDEHGNVPSEKAVKSARTALGLGLDAFARLLAPYLPYATEEVWSWMHAGSGSVHRAAWPVVDPYVEAATGASPELLTWAGKAVEQLRKIKSEAKVSMKTPILSVALSAASEGVDAIHAALGDIAQAGRVVGKFDLVAKHAEESAAEDAPETEVAVEASELGEPPVKKPKH.

The short motif at 57–67 (PTVSGSLHVGH) is the 'HIGH' region element. Positions 599 to 603 (KMSKS) match the 'KMSKS' region motif. Residue Lys602 coordinates ATP. The segment at 882–911 (EESAAEDAPETEVAVEASELGEPPVKKPKH) is disordered.

The protein belongs to the class-I aminoacyl-tRNA synthetase family. ValS type 2 subfamily. As to quaternary structure, monomer.

It localises to the cytoplasm. The catalysed reaction is tRNA(Val) + L-valine + ATP = L-valyl-tRNA(Val) + AMP + diphosphate. Its function is as follows. Catalyzes the attachment of valine to tRNA(Val). As ValRS can inadvertently accommodate and process structurally similar amino acids such as threonine, to avoid such errors, it has a 'posttransfer' editing activity that hydrolyzes mischarged Thr-tRNA(Val) in a tRNA-dependent manner. The sequence is that of Valine--tRNA ligase from Bifidobacterium longum subsp. infantis (strain ATCC 15697 / DSM 20088 / JCM 1222 / NCTC 11817 / S12).